The primary structure comprises 206 residues: Phosphoribosyl-dephospho-CoA transferase (206 aa).

Catalysis depends on residues Asp-131 and Asp-133.

Belongs to the MdcG family.

It carries out the reaction apo-[malonate decarboxylase ACP] + 2'-(5''-triphospho-alpha-D-ribosyl)-3'-dephospho-CoA = holo-[malonate decarboxylase ACP] + diphosphate. Functionally, transfers 2'-(5-triphosphoribosyl)-3'-dephosphocoenzyme-A to the apo-[acyl-carrier-protein] of the malonate decarboxylase to yield holo-[acyl-carrier-protein]. The sequence is that of Phosphoribosyl-dephospho-CoA transferase from Pseudomonas fluorescens (strain Pf0-1).